Consider the following 302-residue polypeptide: Sulfate adenylyltransferase subunit 2 (302 aa).

This sequence belongs to the PAPS reductase family. CysD subfamily. In terms of assembly, heterodimer composed of CysD, the smaller subunit, and CysN.

It catalyses the reaction sulfate + ATP + H(+) = adenosine 5'-phosphosulfate + diphosphate. It functions in the pathway sulfur metabolism; hydrogen sulfide biosynthesis; sulfite from sulfate: step 1/3. With CysN forms the ATP sulfurylase (ATPS) that catalyzes the adenylation of sulfate producing adenosine 5'-phosphosulfate (APS) and diphosphate, the first enzymatic step in sulfur assimilation pathway. APS synthesis involves the formation of a high-energy phosphoric-sulfuric acid anhydride bond driven by GTP hydrolysis by CysN coupled to ATP hydrolysis by CysD. The protein is Sulfate adenylyltransferase subunit 2 of Buchnera aphidicola subsp. Acyrthosiphon pisum (strain 5A).